The following is a 469-amino-acid chain: Protein HEAT STRESS TOLERANT DWD 1 (469 aa).

A compositionally biased stretch (basic residues) spans 1–15 (MGRNVKTKAKRKNKK). Disordered stretches follow at residues 1–29 (MGRN…SIPT) and 115–150 (DVVP…KTPN). The segment covering 124 to 143 (GEDEDEDDEDDSDSDDDDGD) has biased composition (acidic residues). WD repeat units lie at residues 157–197 (AHHG…NALA), 221–261 (GHKD…WAVD), 267–307 (GHTA…SPAL), 311–351 (AHNA…GGDA), 358–398 (YHKH…DEEE), and 425–464 (QGQK…NTLP).

The protein belongs to the WD repeat RBAP46/RBAP48/MSI1 family. As to quaternary structure, probable component of CULLIN4 (CUL4) RING ligase (CRL4) complexes. Interacts with DDB1A and DDB1B. Associates with HSP90-1.

The protein operates within protein modification; protein ubiquitination. Probable substrate receptor of CRL4 E3 ligase complexes acting as negative regulators of thermotolerance by disturbing the action of HSP90-1 and by preventing the expression of heat-inducible genes (e.g. HSP14.7, HSP21, At2g03020 and WRKY28). The sequence is that of Protein HEAT STRESS TOLERANT DWD 1 from Arabidopsis thaliana (Mouse-ear cress).